The chain runs to 131 residues: Large ribosomal subunit protein eL32 (131 aa).

It belongs to the eukaryotic ribosomal protein eL32 family.

This is Large ribosomal subunit protein eL32 (rpl32e) from Sulfurisphaera tokodaii (strain DSM 16993 / JCM 10545 / NBRC 100140 / 7) (Sulfolobus tokodaii).